Consider the following 243-residue polypeptide: ATP synthase subunit a, chloroplastic (243 aa).

5 consecutive transmembrane segments (helical) span residues 32–52 (GQVL…SFVG), 96–116 (TVFL…WALI), 129–149 (DINT…YAGI), 195–215 (LVVG…IMLL), and 216–236 (GCFT…AYIG).

The protein belongs to the ATPase A chain family. In terms of assembly, F-type ATPases have 2 components, CF(1) - the catalytic core - and CF(0) - the membrane proton channel. CF(1) has five subunits: alpha(3), beta(3), gamma(1), delta(1), epsilon(1). CF(0) has four main subunits: a, b, b' and c.

The protein resides in the plastid. The protein localises to the chloroplast thylakoid membrane. In terms of biological role, key component of the proton channel; it plays a direct role in the translocation of protons across the membrane. In Tetradesmus obliquus (Green alga), this protein is ATP synthase subunit a, chloroplastic.